The primary structure comprises 549 residues: Hydroxylamine reductase (549 aa).

Residues Cys5, Cys8, Cys17, and Cys23 each coordinate [4Fe-4S] cluster. Hybrid [4Fe-2O-2S] cluster is bound by residues His244, Glu268, Cys312, Cys403, Cys431, Cys456, Glu491, and Lys493. Cys403 carries the cysteine persulfide modification.

It belongs to the HCP family. Requires [4Fe-4S] cluster as cofactor. The cofactor is hybrid [4Fe-2O-2S] cluster.

The protein localises to the cytoplasm. The enzyme catalyses A + NH4(+) + H2O = hydroxylamine + AH2 + H(+). Its function is as follows. Catalyzes the reduction of hydroxylamine to form NH(3) and H(2)O. The protein is Hydroxylamine reductase of Clostridium perfringens (strain 13 / Type A).